The following is a 359-amino-acid chain: Peptide chain release factor 1 (359 aa).

At glutamine 235 the chain carries N5-methylglutamine. Residues 287–312 form a disordered region; it reads AQEASAMRSAQVGSGDRSERIRTYNF.

The protein belongs to the prokaryotic/mitochondrial release factor family. Methylated by PrmC. Methylation increases the termination efficiency of RF1.

Its subcellular location is the cytoplasm. Peptide chain release factor 1 directs the termination of translation in response to the peptide chain termination codons UAG and UAA. This is Peptide chain release factor 1 from Chlamydia trachomatis serovar A (strain ATCC VR-571B / DSM 19440 / HAR-13).